Consider the following 169-residue polypeptide: Phosphopantetheine adenylyltransferase (169 aa).

Ser-8 is a substrate binding site. Residues 8-9 (SF) and His-16 each bind ATP. Substrate is bound by residues Lys-40, Thr-72, and Arg-86. ATP is bound by residues 87–89 (GLR), Glu-97, and 122–128 (YSFLSSS).

It belongs to the bacterial CoaD family. As to quaternary structure, homohexamer. The cofactor is Mg(2+).

The protein resides in the cytoplasm. It catalyses the reaction (R)-4'-phosphopantetheine + ATP + H(+) = 3'-dephospho-CoA + diphosphate. It participates in cofactor biosynthesis; coenzyme A biosynthesis; CoA from (R)-pantothenate: step 4/5. Its function is as follows. Reversibly transfers an adenylyl group from ATP to 4'-phosphopantetheine, yielding dephospho-CoA (dPCoA) and pyrophosphate. The sequence is that of Phosphopantetheine adenylyltransferase from Cyanothece sp. (strain PCC 7425 / ATCC 29141).